The chain runs to 302 residues: Sulfate adenylyltransferase subunit 2 (302 aa).

It belongs to the PAPS reductase family. CysD subfamily. Heterodimer composed of CysD, the smaller subunit, and CysN.

The enzyme catalyses sulfate + ATP + H(+) = adenosine 5'-phosphosulfate + diphosphate. Its pathway is sulfur metabolism; hydrogen sulfide biosynthesis; sulfite from sulfate: step 1/3. In terms of biological role, with CysN forms the ATP sulfurylase (ATPS) that catalyzes the adenylation of sulfate producing adenosine 5'-phosphosulfate (APS) and diphosphate, the first enzymatic step in sulfur assimilation pathway. APS synthesis involves the formation of a high-energy phosphoric-sulfuric acid anhydride bond driven by GTP hydrolysis by CysN coupled to ATP hydrolysis by CysD. This Yersinia pestis bv. Antiqua (strain Nepal516) protein is Sulfate adenylyltransferase subunit 2.